Reading from the N-terminus, the 998-residue chain is Type II restriction enzyme and methyltransferase RM.Eco57I (998 aa).

It in the C-terminal section; belongs to the N(4)/N(6)-methyltransferase family. In terms of assembly, monomer.

It catalyses the reaction Endonucleolytic cleavage of DNA to give specific double-stranded fragments with terminal 5'-phosphates.. The catalysed reaction is a 2'-deoxyadenosine in DNA + S-adenosyl-L-methionine = an N(6)-methyl-2'-deoxyadenosine in DNA + S-adenosyl-L-homocysteine + H(+). With respect to regulation, mg(2+) is absolutely required for DNA restriction. Its function is as follows. An E, G and S subtype restriction enzyme that recognizes the (non-palindromic) double-stranded sequence 5'-CTGAAG-3' and cleaves respectively 22 bases after C-1 and 14 bases before C'-1; cleavage of lambda DNA is never complete. Also acts as a methylase that causes specific methylation on A-5 in 5'-CTGAAG-3', the other strand is methylated by the M.Eco57I methylase. The chain is Type II restriction enzyme and methyltransferase RM.Eco57I from Escherichia coli.